Here is a 254-residue protein sequence, read N- to C-terminus: 5-oxoprolinase subunit A (254 aa).

The protein belongs to the LamB/PxpA family. Forms a complex composed of PxpA, PxpB and PxpC.

The enzyme catalyses 5-oxo-L-proline + ATP + 2 H2O = L-glutamate + ADP + phosphate + H(+). Its function is as follows. Catalyzes the cleavage of 5-oxoproline to form L-glutamate coupled to the hydrolysis of ATP to ADP and inorganic phosphate. The sequence is that of 5-oxoprolinase subunit A from Heliobacterium modesticaldum (strain ATCC 51547 / Ice1).